The chain runs to 209 residues: MAEKMGILGRKIGVTRIFASDGSAVAVTVIKAGPCPVTQVKTVATDGYDAIQIAFDEAKEKHLNKPEIGHLAKAGKGLFRTLREIRLEAPAAYEVGSELDVTLFATGDRVKVSGTSIGKGYQGVMRRWNFAGSKDTHGCEKVHRSGGSIGNNTFPGHVFKGKKMAGHWGNESVTVLNLEVVDVRPEDNVILVKGSVPGPKNGLVMVRKQ.

Belongs to the universal ribosomal protein uL3 family. Part of the 50S ribosomal subunit. Forms a cluster with proteins L14 and L19.

Its function is as follows. One of the primary rRNA binding proteins, it binds directly near the 3'-end of the 23S rRNA, where it nucleates assembly of the 50S subunit. This is Large ribosomal subunit protein uL3 from Nitratidesulfovibrio vulgaris (strain ATCC 29579 / DSM 644 / CCUG 34227 / NCIMB 8303 / VKM B-1760 / Hildenborough) (Desulfovibrio vulgaris).